Reading from the N-terminus, the 154-residue chain is uncharacterized protein (154 aa).

A helical transmembrane segment spans residues 23–43; the sequence is SAVALVTFAGAALSGVIPAIA.

It is found in the membrane. This is an uncharacterized protein from Mycobacterium tuberculosis (strain CDC 1551 / Oshkosh).